Reading from the N-terminus, the 391-residue chain is Putative gustatory receptor 36a (391 aa).

Over 1 to 3 (MFD) the chain is Cytoplasmic. The chain crosses the membrane as a helical span at residues 4-24 (WVGLLLKVLYYYGQIIGLINF). Topologically, residues 25–38 (EIDWQRGRVVAAQR) are extracellular. Residues 39-59 (GILFAIAINVLICMVLLLQIS) form a helical membrane-spanning segment. Residues 60 to 73 (KKFNLDVYFGRANQ) are Cytoplasmic-facing. Residues 74–94 (LHQYVIIVMVSLRMASGISAI) traverse the membrane as a helical segment. Over 95–126 (LNRWRQRAQLMRLVECVLRLFLKKPHVKQMSR) the chain is Extracellular. A helical membrane pass occupies residues 127 to 147 (WAILVKFSVGVVSNFLQMAIS). At 148–165 (MESLDRLGFNEFVGMASD) the chain is on the cytoplasmic side. The helical transmembrane segment at 166 to 186 (FWMSAIINMAISQHYLVILFV) threads the bilayer. Over 187-247 (RAYYHLLKTE…LQSIVTQLNQ (61 aa)) the chain is Extracellular. Residues 248–268 (VFGIQGIMVYGGYYIFSVATT) form a helical membrane-spanning segment. Residues 269-290 (YITYSLAINGIEELHLSVRAAA) are Cytoplasmic-facing. Residues 291 to 311 (LVFSWFLFYYTSAILNLFVML) traverse the membrane as a helical segment. Residues 312–391 (KLFDDHKEME…FLIQYDMEYF (80 aa)) lie on the Extracellular side of the membrane.

It belongs to the insect chemoreceptor superfamily. Gustatory receptor (GR) family. Gr22e subfamily.

It localises to the cell membrane. In terms of biological role, probable gustatory receptor which mediates acceptance or avoidance behavior, depending on its substrates. The chain is Putative gustatory receptor 36a (Gr36a) from Drosophila melanogaster (Fruit fly).